A 246-amino-acid chain; its full sequence is 4-hydroxy-tetrahydrodipicolinate reductase (246 aa).

Residue 7–12 (GCSGRM) participates in NAD(+) binding. Arg-34 serves as a coordination point for NADP(+). Residues 76-78 (ATT) and 102-105 (CPNT) each bind NAD(+). His-135 (proton donor/acceptor) is an active-site residue. Residue His-136 coordinates (S)-2,3,4,5-tetrahydrodipicolinate. The active-site Proton donor is the Lys-139. (S)-2,3,4,5-tetrahydrodipicolinate is bound at residue 145–146 (GT).

Belongs to the DapB family.

The protein resides in the cytoplasm. The catalysed reaction is (S)-2,3,4,5-tetrahydrodipicolinate + NAD(+) + H2O = (2S,4S)-4-hydroxy-2,3,4,5-tetrahydrodipicolinate + NADH + H(+). The enzyme catalyses (S)-2,3,4,5-tetrahydrodipicolinate + NADP(+) + H2O = (2S,4S)-4-hydroxy-2,3,4,5-tetrahydrodipicolinate + NADPH + H(+). Its pathway is amino-acid biosynthesis; L-lysine biosynthesis via DAP pathway; (S)-tetrahydrodipicolinate from L-aspartate: step 4/4. In terms of biological role, catalyzes the conversion of 4-hydroxy-tetrahydrodipicolinate (HTPA) to tetrahydrodipicolinate. This is 4-hydroxy-tetrahydrodipicolinate reductase from Chlamydia caviae (strain ATCC VR-813 / DSM 19441 / 03DC25 / GPIC) (Chlamydophila caviae).